The sequence spans 200 residues: Inducible T-cell costimulator (200 aa).

The signal sequence occupies residues 1–20 (MKPYFCRVFVFCFLIRLLTG). The Extracellular portion of the chain corresponds to 21–144 (EINGSADHRM…QLCCQLKLWL (124 aa)). The N-linked (GlcNAc...) asparagine glycan is linked to asparagine 23. The 104-residue stretch at 30–133 (MFSFHNGGVQ…LSGGYLHIYE (104 aa)) folds into the Ig-like V-type domain. Intrachain disulfides connect cysteine 42–cysteine 109 and cysteine 63–cysteine 83. N-linked (GlcNAc...) asparagine glycosylation is found at asparagine 89 and asparagine 123. Residues 145–165 (PVGCAAFVVVLLFGCILIIWF) traverse the membrane as a helical segment. Topologically, residues 166–200 (SKKKYGSSVHDPNSEYMFMAAVNTNKKSRLAGVTS) are cytoplasmic.

Homodimer; disulfide-linked. Interacts with ICOSLG. Interacts with PIK3R1. Interacts with TBK1; this interaction is critical for the maturation of T follicular regulatory cells. Post-translationally, N-glycosylated. In terms of tissue distribution, expressed on activated T-cells and resting memory T-cells. High expression seen in the thymic medulla and in the germinal centers and T-cell zones of lymph nodes and Peyer patches. Expressed at low levels in the spleen.

The protein resides in the cell membrane. In terms of biological role, stimulatory receptor expressed in activated or antigen-experienced T-cells that plays an important role in the immune response. Upon binding to its ligand ICOSL expressed on antigen presenting cells (APCs), delivers costimulatory signals that enhances all basic T-cell responses to a foreign antigen, namely proliferation, secretion of lymphokines including IL10, up-regulation of molecules that mediate cell-cell interaction, and effective help for antibody secretion by B-cells. Also acts as a costimulatory receptor critical for the differentiation of T follicular regulatory cells upon immune challenges such as viral infection. Mechanistically, potentiates TCR-induced calcium flux by augmenting PLCG1 activation and actin remodeling. In addition, activates PI3K signaling pathways independently of calcium flux. Essential both for efficient interaction between T and B-cells and for normal antibody responses to T-cell dependent antigens. Prevents the apoptosis of pre-activated T-cells. Plays a critical role in CD40-mediated class switching of immunoglobin isotypes. This chain is Inducible T-cell costimulator (Icos), found in Mus musculus (Mouse).